A 286-amino-acid polypeptide reads, in one-letter code: MQSISVKAYAKINLGLLITGKRPDGYHTLETVFAPINWYDELTFSPSQEVRMSCTNQDLPCDDSNLCIRAAKALRDFSGVSSGVEIGLAKHIPFGAGLGGGSSDAASTLRVLNRMWNINASSHDLHRIAVGLGADVPYFLESGGLAYAAGIGEELEDLELTLPFSIVTLFPGDHISTVWAYRNFYACFEREIPDLKGLVRSLCQARDTSVLEVFDNDFEPVVFDHYPAVREAKDALVQSGSFFASLSGSGSAVFGLFENDSDAERAAEQLSATYRARFTPASFAMA.

Lys11 is a catalytic residue. Residue 93–103 (PFGAGLGGGSS) coordinates ATP. The active site involves Asp135.

It belongs to the GHMP kinase family. IspE subfamily.

It catalyses the reaction 4-CDP-2-C-methyl-D-erythritol + ATP = 4-CDP-2-C-methyl-D-erythritol 2-phosphate + ADP + H(+). The protein operates within isoprenoid biosynthesis; isopentenyl diphosphate biosynthesis via DXP pathway; isopentenyl diphosphate from 1-deoxy-D-xylulose 5-phosphate: step 3/6. Functionally, catalyzes the phosphorylation of the position 2 hydroxy group of 4-diphosphocytidyl-2C-methyl-D-erythritol. In Prosthecochloris aestuarii (strain DSM 271 / SK 413), this protein is 4-diphosphocytidyl-2-C-methyl-D-erythritol kinase.